The following is a 187-amino-acid chain: Transmembrane protein 272 (187 aa).

A run of 4 helical transmembrane segments spans residues 21 to 41 (CFVV…FIGM), 52 to 72 (LIPL…SLLL), 107 to 127 (IHLL…YWVF), and 149 to 169 (LYLF…LLLL).

The protein localises to the membrane. This chain is Transmembrane protein 272, found in Homo sapiens (Human).